The sequence spans 432 residues: MKFTLVATVLLTFSLSAFAVEYPVLTTASPDQVGFDSQKLHRLDGWIQNQIDAGYPSINLLVIKDNHIVLQKAWGYAKKYDGSTLLAHPIRATTNTMYDLASNTKMYATNFALQKLVYEGKIDVNDLVSKYIPGFKDMPGDKIKGKNKLRIIDILHHVAGFPADPQYPNKNVAGKLFSQSKSTTLEMIKKTPLEYQPGSKHIYSDVDYMILGFIIESITAIPLDRYVETTIYKPLGLKHTVFNPLMKGFTPPQIAATELHGNTRDGVIHFPNIRTNTLWGQVHDEKAWYSMGGVSGHAGLFSDTHDMAVLMQVMLNGGGYGNVKLFDDKTVAQFTRRSPEDATFGLGWRVNGNASMTPTFGVLASPQTYGHTGWTGTLTSIDPVNHMAIVILGNRPHSPVANPKVNPNVFVSGLLPAATYGWIVDQIYGSLK.

Residues 7–25 form a helical; Signal-anchor membrane-spanning segment; that stretch reads ATVLLTFSLSAFAVEYPVL.

This sequence belongs to the peptidase S12 family. YfeW subfamily.

It localises to the cell inner membrane. The enzyme catalyses Preferential cleavage: (Ac)2-L-Lys-D-Ala-|-D-Ala. Also transpeptidation of peptidyl-alanyl moieties that are N-acyl substituents of D-alanine.. This chain is Putative D-alanyl-D-alanine carboxypeptidase, found in Salmonella heidelberg (strain SL476).